Reading from the N-terminus, the 147-residue chain is Interleukin-4 (147 aa).

The N-terminal stretch at 1–24 (MGLSPHLAVTLFCFLICTGNGIHG) is a signal peptide. Cysteine 47 and cysteine 87 are oxidised to a cystine. 3 N-linked (GlcNAc...) asparagine glycosylation sites follow: asparagine 61, asparagine 90, and asparagine 117.

It belongs to the IL-4/IL-13 family.

The protein localises to the secreted. Its function is as follows. Participates in at least several B-cell activation processes as well as of other cell types. It is a costimulator of DNA-synthesis. It induces the expression of class II MHC molecules on resting B-cells. It enhances both secretion and cell surface expression of IgE and IgG1. It also regulates the expression of the low affinity Fc receptor for IgE (CD23) on both lymphocytes and monocytes. Positively regulates IL31RA expression in macrophages. Stimulates autophagy in dendritic cells by interfering with mTORC1 signaling and through the induction of RUFY4. The sequence is that of Interleukin-4 (Il4) from Rattus norvegicus (Rat).